The following is a 117-amino-acid chain: Anti-sigma F factor antagonist (117 aa).

The STAS domain maps to 2–115 (HFQLEMVTRE…QAIDRVRGIV (114 aa)). A Phosphoserine modification is found at Ser58.

Belongs to the anti-sigma-factor antagonist family. Phosphorylated by SpoIIAB on a serine residue.

In terms of biological role, in the phosphorylated form it could act as an anti-anti-sigma factor that counteracts SpoIIAB and thus releases sigma f from inhibition. This Lysinibacillus sphaericus (Bacillus sphaericus) protein is Anti-sigma F factor antagonist (spoIIAA).